Reading from the N-terminus, the 153-residue chain is Transcriptional repressor NrdR 2 (153 aa).

The segment at 3–34 (CPFCGQDDTQVKDSRPTDDNAAIRRRRACPGC) is a zinc-finger region. An ATP-cone domain is found at 49–139 (LVVVKKDGSR…VYRNFREAKD (91 aa)).

It belongs to the NrdR family. The cofactor is Zn(2+).

Functionally, negatively regulates transcription of bacterial ribonucleotide reductase nrd genes and operons by binding to NrdR-boxes. This is Transcriptional repressor NrdR 2 from Paramagnetospirillum magneticum (strain ATCC 700264 / AMB-1) (Magnetospirillum magneticum).